The following is a 583-amino-acid chain: Pre-mRNA-processing protein PRP40 (583 aa).

WW domains are found at residues 1 to 31 (MSIW…KPKE) and 42 to 72 (ENGW…IPAF). FF domains lie at 132 to 188 (KEEA…YLSN), 201 to 257 (TSKF…YIDT), 262 to 332 (QKES…YLKI), 354 to 413 (RDRI…FVDE), 427 to 488 (QTLI…KLQN), and 491 to 552 (RILE…FKPE). Phosphothreonine is present on Thr-576.

It belongs to the PRPF40 family. Interacts with CRM1, MSL5, PRP8, and the RNA polymerase II largest subunit (RPB1). MSL5, MUD2 and PRP40 interact to form the commitment complex 2 (CC2), a precursor of mature spliceosomes.

Its subcellular location is the nucleus. Functionally, required for pre-spliceosome formation, which is the first step of pre-mRNA splicing. This protein is associated with snRNP U1. Two commitment complexes, CC1 and CC2, have been defined in yeast. CC1 is a basal complex dependent only on the 5' splice site. CC2 is a complex of lower mobility and is dependent on a branchpoint as well as a 5' splice site region. This protein is involved in CC2 formation where it binds to the branchpoint binding protein MSL5, bridging the U1 snRNP-associated 5' splice site and the MSL5-associated branch point 3' intron splice site. The protein is Pre-mRNA-processing protein PRP40 (PRP40) of Saccharomyces cerevisiae (strain ATCC 204508 / S288c) (Baker's yeast).